An 86-amino-acid chain; its full sequence is Large ribosomal subunit protein bL31 (86 aa).

The disordered stretch occupies residues 66–86 (GMGSADSATSQETKEAKESDK). A compositionally biased stretch (basic and acidic residues) spans 77–86 (ETKEAKESDK).

Belongs to the bacterial ribosomal protein bL31 family. Type A subfamily. As to quaternary structure, part of the 50S ribosomal subunit.

Binds the 23S rRNA. The sequence is that of Large ribosomal subunit protein bL31 from Prochlorococcus marinus (strain MIT 9515).